Reading from the N-terminus, the 1356-residue chain is Serine/threonine-protein kinase PSK1 (1356 aa).

S10 is subject to Phosphoserine. The disordered stretch occupies residues 20–115 (KHAITHKGTS…SVDSTVSSPL (96 aa)). Polar residues-rich tracts occupy residues 26-37 (KGTSSSVASLQT) and 54-64 (YDTSLSDVSTP). A compositionally biased stretch (low complexity) spans 99-115 (LPSTASSSVDSTVSSPL). Phosphoserine occurs at positions 192, 202, 255, 286, and 327. The PAS 1 domain occupies 450–518 (RTFTSTKNSA…VLHKLLSTEG (69 aa)). The segment covering 592–608 (PTLSSSSTLSLPKMASS) has biased composition (low complexity). Disordered stretches follow at residues 592–612 (PTLSSSSTLSLPKMASSPTGS) and 627–660 (YTKPTSTENRNGDENQLDGDSHSEPSLSSSPVRS). Residues 738-807 (LKLKIHSLPY…FINDKYPALD (70 aa)) enclose the PAS 2 domain. At S926 the chain carries Phosphoserine. A disordered region spans residues 948–972 (DSRAHSQSTLSEQEQVPLENDKDSG). Polar residues predominate over residues 952–961 (HSQSTLSEQE). Residues S1018, S1023, S1035, and S1055 each carry the phosphoserine modification. Positions 1021 to 1032 (TESLADSKSSGK) are enriched in polar residues. The disordered stretch occupies residues 1021–1066 (TESLADSKSSGKGLSPLEEEKLIDENATENGLAGSPKDEDGIIMTN). A Phosphothreonine modification is found at T1079. Residues 1096–1354 (FVSLQKMGEG…IDDINNDKWL (259 aa)) form the Protein kinase domain. ATP-binding positions include 1102–1110 (MGEGAYGKV) and K1125. Residue D1230 is the Proton acceptor of the active site.

This sequence belongs to the protein kinase superfamily. Ser/Thr protein kinase family.

Its subcellular location is the cytoplasm. The catalysed reaction is L-seryl-[protein] + ATP = O-phospho-L-seryl-[protein] + ADP + H(+). It carries out the reaction L-threonyl-[protein] + ATP = O-phospho-L-threonyl-[protein] + ADP + H(+). In terms of biological role, serine/threonine-protein kinase involved in the control of sugar metabolism and translation. Phosphorylates UGP1, which is required for normal glycogen and beta-(1,6)-glucan synthesis. This phosphorylation shifts glucose partitioning toward cell wall glucan synthesis at the expense of glycogen synthesis. The sequence is that of Serine/threonine-protein kinase PSK1 (PSK1) from Saccharomyces cerevisiae (strain ATCC 204508 / S288c) (Baker's yeast).